The sequence spans 190 residues: DNA dC-&gt;dU-editing enzyme APOBEC-3C (190 aa).

A CMP/dCMP-type deaminase domain is found at 29-138 (DRNETWLCFT…TDYQEGLRSL (110 aa)). 3 residues coordinate Zn(2+): histidine 66, cysteine 97, and cysteine 100.

This sequence belongs to the cytidine and deoxycytidylate deaminase family. In terms of assembly, homodimer. Interacts with TRIB3. The cofactor is Zn(2+).

It is found in the nucleus. It localises to the cytoplasm. The enzyme catalyses a 2'-deoxycytidine in single-stranded DNA + H2O + H(+) = a 2'-deoxyuridine in single-stranded DNA + NH4(+). DNA deaminase (cytidine deaminase) which acts as an inhibitor of retrovirus replication and retrotransposon mobility via deaminase-dependent and -independent mechanisms. May also play a role in the epigenetic regulation of gene expression through the process of active DNA demethylation. The protein is DNA dC-&gt;dU-editing enzyme APOBEC-3C (APOBEC3C) of Gorilla gorilla gorilla (Western lowland gorilla).